The chain runs to 240 residues: Lactate utilization protein C (240 aa).

Belongs to the LutC/YkgG family.

In terms of biological role, is involved in L-lactate degradation and allows cells to grow with lactate as the sole carbon source. This is Lactate utilization protein C from Geobacillus thermodenitrificans (strain NG80-2).